Reading from the N-terminus, the 784-residue chain is Ribosome biogenesis protein BOP1 homolog (784 aa).

The segment covering 1–11 (MTKKLALKRKG) has biased composition (basic residues). Residues 1–159 (MTKKLALKRK…DSDTSDEEDI (159 aa)) are disordered. 4 stretches are compositionally biased toward acidic residues: residues 27 to 36 (SENEEEEEDL), 45 to 54 (EDSTDDEGID), 62 to 73 (SEELQFESDEEG), and 84 to 111 (AEEDEESSDEDDDGEEESSDEEEVEDEE). Over residues 112 to 123 (KDSKLKQSDDKP) the composition is skewed to basic and acidic residues. Residues 124–133 (SSSGAASKKA) show a composition bias toward low complexity. The span at 138-148 (LSKRDTSKPEY) shows a compositional bias: basic and acidic residues. The span at 149 to 158 (QDSDTSDEED) shows a compositional bias: acidic residues. 7 WD repeats span residues 445-486 (GHTD…RTIE), 488-526 (DEVVRCVAWCPNPKLSIIAVATGNRLLLVNPKVGDKVLV), 570-612 (THFK…SQIP), 615-653 (KSKGLIQFVLFHPVKPCFFVATQHNIRIYDLVKQELVKK), 656-695 (TNSKWISGMSIHPKGDNLLVSTYDKKMLWFDLDLSTKPYQ), 699-738 (LHRNAVRSVAFHLRYPLFASGSDDQAVIVSHGMVYNDLLQ), and 754-784 (RDEFGVLDVNWHPVQPWVFSTGADSTIRLYT).

Belongs to the WD repeat BOP1/ERB1 family.

It is found in the nucleus. The protein localises to the nucleolus. Its subcellular location is the nucleoplasm. Functionally, required for maturation of ribosomal RNAs and formation of the large ribosomal subunit. The polypeptide is Ribosome biogenesis protein BOP1 homolog (Drosophila erecta (Fruit fly)).